A 412-amino-acid polypeptide reads, in one-letter code: uncharacterized protein (412 aa).

It belongs to the PQQ oxidoreductase GdhB family. The cofactor is pyrroloquinoline quinone.

This is an uncharacterized protein from Synechocystis sp. (strain ATCC 27184 / PCC 6803 / Kazusa).